A 578-amino-acid chain; its full sequence is MKASRFFIGTLKEAPADAEIVSHKLMVRAGMIRRVAGGIYNYLPVGLRSIRKVEAIVREEMNRAGAIELLMPAVQPAELWQESGRWEQYGPELLRFKDRKDNDFVIGPTHEEVVTDIARNQIKSYRQMPVNFYQIQTKFRDEIRPRFGVMRGREFLMKDAYSFDKDTAGLNESYRKMYDAYVRIFTRLGLEFRAVAADSGSIGGNFSHEFHVIADTGEDAIAYCPTSDFAANIEAAEALPLIAERAAPAEAMEKVATPGKAKCEAVAELLAIPLERTIKSIVLATENEGAEPTIWLIMLRGDHDLNEIKVSKLPGLKNHRFATEQEIVDWFGTPPGYLGPVGTKKPVKVIADRTVANMSDFVVGANEVDYHIAGVNWGRDLPEPEVADVRDVKKGDPSPDGKGTIDICRGIEVGHVFQLGTKYSDAMGATFLDESGKPQPMLMGCYGVGITRILGAAIEQNFDDKGIIWPESIAPFEVVLCPMGYDRSDMVREAADKLYAELAAAGIDVILDDRGERPGVMFADWELIGVPHRLVIGERGLKEGKIEYQGRRDAEATLLPADEAAATVTEKIRAALAH.

It belongs to the class-II aminoacyl-tRNA synthetase family. ProS type 1 subfamily. Homodimer.

It is found in the cytoplasm. The enzyme catalyses tRNA(Pro) + L-proline + ATP = L-prolyl-tRNA(Pro) + AMP + diphosphate. Its function is as follows. Catalyzes the attachment of proline to tRNA(Pro) in a two-step reaction: proline is first activated by ATP to form Pro-AMP and then transferred to the acceptor end of tRNA(Pro). As ProRS can inadvertently accommodate and process non-cognate amino acids such as alanine and cysteine, to avoid such errors it has two additional distinct editing activities against alanine. One activity is designated as 'pretransfer' editing and involves the tRNA(Pro)-independent hydrolysis of activated Ala-AMP. The other activity is designated 'posttransfer' editing and involves deacylation of mischarged Ala-tRNA(Pro). The misacylated Cys-tRNA(Pro) is not edited by ProRS. The polypeptide is Proline--tRNA ligase (Burkholderia ambifaria (strain ATCC BAA-244 / DSM 16087 / CCUG 44356 / LMG 19182 / AMMD) (Burkholderia cepacia (strain AMMD))).